We begin with the raw amino-acid sequence, 211 residues long: Thymidine kinase (211 aa).

Residues 9–16 (STMNAGKS) and 87–90 (DEAQ) contribute to the ATP site. The Proton acceptor role is filled by Glu-88. Zn(2+) is bound by residues Cys-145, Cys-147, Cys-182, and His-185.

This sequence belongs to the thymidine kinase family. As to quaternary structure, homotetramer.

Its subcellular location is the cytoplasm. It catalyses the reaction thymidine + ATP = dTMP + ADP + H(+). The polypeptide is Thymidine kinase (Rhodopirellula baltica (strain DSM 10527 / NCIMB 13988 / SH1)).